The sequence spans 172 residues: Shikimate kinase (172 aa).

Gly14 to Thr19 is a binding site for ATP. A Mg(2+)-binding site is contributed by Ser18. 3 residues coordinate substrate: Asp36, Arg60, and Gly82. Arg120 is an ATP binding site. Arg139 is a substrate binding site. Gln156 contributes to the ATP binding site.

It belongs to the shikimate kinase family. In terms of assembly, monomer. Mg(2+) serves as cofactor.

It is found in the cytoplasm. The enzyme catalyses shikimate + ATP = 3-phosphoshikimate + ADP + H(+). The protein operates within metabolic intermediate biosynthesis; chorismate biosynthesis; chorismate from D-erythrose 4-phosphate and phosphoenolpyruvate: step 5/7. In terms of biological role, catalyzes the specific phosphorylation of the 3-hydroxyl group of shikimic acid using ATP as a cosubstrate. The protein is Shikimate kinase of Aliivibrio fischeri (strain ATCC 700601 / ES114) (Vibrio fischeri).